The chain runs to 189 residues: Chitin synthase 1 (189 aa).

This sequence belongs to the chitin synthase family.

The protein resides in the cell membrane. It catalyses the reaction [(1-&gt;4)-N-acetyl-beta-D-glucosaminyl](n) + UDP-N-acetyl-alpha-D-glucosamine = [(1-&gt;4)-N-acetyl-beta-D-glucosaminyl](n+1) + UDP + H(+). Polymerizes chitin, a structural polymer of the cell wall and septum, by transferring the sugar moiety of UDP-GlcNAc to the non-reducing end of the growing chitin polymer. This chain is Chitin synthase 1 (CHS1), found in Xylohypha bantiana.